The chain runs to 300 residues: N-acetylmuramic acid 6-phosphate etherase (300 aa).

The region spanning 57 to 220 is the SIS domain; sequence VAAALRAGGR…STGAMIRIGK (164 aa). The active-site Proton donor is Glu85. Glu116 is an active-site residue.

It belongs to the GCKR-like family. MurNAc-6-P etherase subfamily. Homodimer.

It carries out the reaction N-acetyl-D-muramate 6-phosphate + H2O = N-acetyl-D-glucosamine 6-phosphate + (R)-lactate. It participates in amino-sugar metabolism; 1,6-anhydro-N-acetylmuramate degradation. The protein operates within amino-sugar metabolism; N-acetylmuramate degradation. It functions in the pathway cell wall biogenesis; peptidoglycan recycling. Functionally, specifically catalyzes the cleavage of the D-lactyl ether substituent of MurNAc 6-phosphate, producing GlcNAc 6-phosphate and D-lactate. Together with AnmK, is also required for the utilization of anhydro-N-acetylmuramic acid (anhMurNAc) either imported from the medium or derived from its own cell wall murein, and thus plays a role in cell wall recycling. The protein is N-acetylmuramic acid 6-phosphate etherase of Klebsiella aerogenes (Enterobacter aerogenes).